A 551-amino-acid chain; its full sequence is MLCSLLLCECLLLVAGYAHDDDWIDPTDMLNYDAASGTMRKSQAKYGISGEKDVSPDLSCADEISECYHKLDSLTYKIDECEKKKREDYESQSNPVFRRYLNKILIEAGKLGLPDENKGDMHYDAEIILKRETLLEIQKFLNGEDWKPGALDDALSDILINFKFHDFETWKWRFEDSFGVDPYNVLMVLLCLLCIVVLVATELWTYVRWYTQLRRVLIISFLFSLGWNWMYLYKLAFAQHQAEVAKMEPLNNVCAKKMDWTGSIWEWFRSSWTYKDDPCQKYYELLLVNPIWLVPPTKALAVTFTTFVTEPLKHIGKGTGEFIKALMKEIPALLHLPVLIIMALAILSFCYGAGKSVHVLRHIGGPESEPPQALRPRDRRRQEEIDYRPDGGAGDADFHYRGQMGPTEQGPYAKTYEGRREILRERDVDLRFQTGNKSPEVLRAFDVPDAEAREHPTVVPSHKSPVLDTKPKETGGILGEGTPKESSTESSQSAKPVSGQDTSGNTEGSPAAEKAQLKSEAAGSPDQGSTYSPARGVAGPRGQDPVSSPCG.

Positions methionine 1–alanine 18 are cleaved as a signal peptide. At histidine 19–asparagine 184 the chain is on the lumenal side. Residues valine 185–threonine 205 traverse the membrane as a helical segment. Residues tyrosine 206–valine 216 lie on the Cytoplasmic side of the membrane. A helical transmembrane segment spans residues leucine 217–phenylalanine 237. Topologically, residues alanine 238–glutamate 329 are lumenal. Residues isoleucine 330–cysteine 350 traverse the membrane as a helical segment. The Cytoplasmic portion of the chain corresponds to tyrosine 351–glycine 551. Positions isoleucine 363 to threonine 415 are disordered. Over residues arginine 380 to proline 389 the composition is skewed to basic and acidic residues. Serine 438 and serine 464 each carry phosphoserine. Positions valine 447–glycine 551 are disordered. The residue at position 482 (threonine 482) is a Phosphothreonine. Over residues threonine 488–glycine 508 the composition is skewed to polar residues. A phosphoserine mark is found at serine 509, serine 524, and serine 532.

It belongs to the chloride channel MCLC family. As to quaternary structure, homomultimers. Interacts with mitochondrial protein PIGBOS1 (via C-terminus); the interaction occurs at the mitochondria-associated endoplasmic reticulum (ER) membrane, a zone of contact between the ER and mitochondrial membranes, but does not appear to play a role in ER-mitochondria tethering and is not affected by ER stress. Interacts with CALR. In terms of tissue distribution, expressed in the retina of the eye, with extensive expression in the lamina cribrosa, optic nerve, ganglion cell layer, inner nuclear layer, outer nuclear layer and retinal pigment epithelium.

Its subcellular location is the endoplasmic reticulum membrane. It catalyses the reaction chloride(in) = chloride(out). The catalysed reaction is bromide(in) = bromide(out). The enzyme catalyses nitrate(in) = nitrate(out). It carries out the reaction fluoride(in) = fluoride(out). Inhibited by ER lumenal Ca(2+). Its function is as follows. Anion-selective channel with Ca(2+)-dependent and voltage-independent gating. Permeable to small monovalent anions with selectivity for bromide &gt; chloride &gt; nitrate &gt; fluoride. Operates in the endoplasmic reticulum (ER) membrane where it mediates chloride efflux to compensate for the loss of positive charges from the ER lumen upon Ca(2+) release. Contributes to the maintenance of ER Ca(2+) pools and activation of unfolded protein response to prevent accumulation of misfolded proteins in the ER lumen. Particularly involved in ER homeostasis mechanisms underlying motor neurons and retinal photoreceptors survival. The protein is Chloride channel CLIC-like protein 1 of Homo sapiens (Human).